We begin with the raw amino-acid sequence, 414 residues long: Histidine--tRNA ligase (414 aa).

This sequence belongs to the class-II aminoacyl-tRNA synthetase family. In terms of assembly, homodimer.

It is found in the cytoplasm. It catalyses the reaction tRNA(His) + L-histidine + ATP = L-histidyl-tRNA(His) + AMP + diphosphate + H(+). The polypeptide is Histidine--tRNA ligase (Mycoplasma capricolum subsp. capricolum (strain California kid / ATCC 27343 / NCTC 10154)).